The chain runs to 173 residues: Alpha-crystallin A chain (173 aa).

Met1 carries the N-acetylmethionine modification. Residues 1–63 form a required for complex formation with BFSP1 and BFSP2 region; that stretch reads MDITIQHPWF…RTVLESGISE (63 aa). Position 6 is a deamidated glutamine; partial (Gln6). Ser45 carries the post-translational modification Phosphoserine. A Deamidated glutamine; partial modification is found at Gln50. The sHSP domain occupies 52–164; the sequence is LFRTVLESGI…SDRSIPVSRE (113 aa). Residues Lys70 and Lys99 each carry the N6-acetyllysine modification. Zn(2+) contacts are provided by His100, Glu102, and His107. Position 122 is a phosphoserine (Ser122). Asn123 carries the deamidated asparagine; partial modification. The segment covering 146–167 has biased composition (basic and acidic residues); it reads IHSDMDASHSDRSIPVSREEKP. The tract at residues 146-173 is disordered; the sequence is IHSDMDASHSDRSIPVSREEKPTLAPSS. A Zn(2+)-binding site is contributed by His154. A glycan (O-linked (GlcNAc) serine) is linked at Ser162.

Belongs to the small heat shock protein (HSP20) family. As to quaternary structure, heteromer composed of three CRYAA and one CRYAB subunits. Inter-subunit bridging via zinc ions enhances stability, which is crucial as there is no protein turn over in the lens. Can also form homodimers and homotetramers (dimers of dimers) which serve as the building blocks of homooligomers. Within homooligomers, the zinc-binding motif is created from residues of 3 different molecules. His-100 and Glu-102 from one molecule are ligands of the zinc ion, and His-107 and His-154 residues from additional molecules complete the site with tetrahedral coordination geometry. Part of a complex required for lens intermediate filament formation composed of BFSP1, BFSP2 and CRYAA. In terms of processing, acetylation at Lys-70 may increase chaperone activity. Undergoes age-dependent proteolytical cleavage at the C-terminus.

The protein resides in the cytoplasm. It localises to the nucleus. Its function is as follows. Contributes to the transparency and refractive index of the lens. Acts as a chaperone, preventing aggregation of various proteins under a wide range of stress conditions. Required for the correct formation of lens intermediate filaments as part of a complex composed of BFSP1, BFSP2 and CRYAA. The sequence is that of Alpha-crystallin A chain (CRYAA) from Osphranter rufus (Red kangaroo).